A 96-amino-acid polypeptide reads, in one-letter code: Co-chaperonin GroES (96 aa).

This sequence belongs to the GroES chaperonin family. In terms of assembly, heptamer of 7 subunits arranged in a ring. Interacts with the chaperonin GroEL.

The protein resides in the cytoplasm. Together with the chaperonin GroEL, plays an essential role in assisting protein folding. The GroEL-GroES system forms a nano-cage that allows encapsulation of the non-native substrate proteins and provides a physical environment optimized to promote and accelerate protein folding. GroES binds to the apical surface of the GroEL ring, thereby capping the opening of the GroEL channel. The sequence is that of Co-chaperonin GroES from Leptospira interrogans serogroup Icterohaemorrhagiae serovar copenhageni (strain Fiocruz L1-130).